The sequence spans 304 residues: UDP-3-O-acyl-N-acetylglucosamine deacetylase (304 aa).

The Zn(2+) site is built by H78, H237, and D241. The active-site Proton donor is the H264.

This sequence belongs to the LpxC family. The cofactor is Zn(2+).

The enzyme catalyses a UDP-3-O-[(3R)-3-hydroxyacyl]-N-acetyl-alpha-D-glucosamine + H2O = a UDP-3-O-[(3R)-3-hydroxyacyl]-alpha-D-glucosamine + acetate. The protein operates within glycolipid biosynthesis; lipid IV(A) biosynthesis; lipid IV(A) from (3R)-3-hydroxytetradecanoyl-[acyl-carrier-protein] and UDP-N-acetyl-alpha-D-glucosamine: step 2/6. Its function is as follows. Catalyzes the hydrolysis of UDP-3-O-myristoyl-N-acetylglucosamine to form UDP-3-O-myristoylglucosamine and acetate, the committed step in lipid A biosynthesis. The sequence is that of UDP-3-O-acyl-N-acetylglucosamine deacetylase from Xylella fastidiosa (strain Temecula1 / ATCC 700964).